The chain runs to 343 residues: Selenide, water dikinase (343 aa).

The active site involves Sec13. Position 13 (Sec13) is a non-standard amino acid, selenocysteine. ATP-binding positions include Lys16 and 44 to 46; that span reads TAD. Asp47 serves as a coordination point for Mg(2+). ATP contacts are provided by residues Asp64, Asp87, and 135-137; that span reads GHT. Residue Asp87 participates in Mg(2+) binding. Asp223 lines the Mg(2+) pocket.

The protein belongs to the selenophosphate synthase 1 family. Class I subfamily. As to quaternary structure, homodimer. The cofactor is Mg(2+).

It carries out the reaction hydrogenselenide + ATP + H2O = selenophosphate + AMP + phosphate + 2 H(+). In terms of biological role, synthesizes selenophosphate from selenide and ATP. The chain is Selenide, water dikinase from Geobacter metallireducens (strain ATCC 53774 / DSM 7210 / GS-15).